The chain runs to 269 residues: Ribonuclease HII (269 aa).

The RNase H type-2 domain maps to tyrosine 83–leucine 269. A divalent metal cation-binding residues include aspartate 89, glutamate 90, and aspartate 185.

Belongs to the RNase HII family. Mn(2+) serves as cofactor. It depends on Mg(2+) as a cofactor.

The protein localises to the cytoplasm. It catalyses the reaction Endonucleolytic cleavage to 5'-phosphomonoester.. Its function is as follows. Endonuclease that specifically degrades the RNA of RNA-DNA hybrids. The protein is Ribonuclease HII of Clostridium botulinum (strain Hall / ATCC 3502 / NCTC 13319 / Type A).